The primary structure comprises 495 residues: Putative aldehyde dehydrogenase AldA (495 aa).

212–218 (GKGSESG) contributes to the NAD(+) binding site. Residues Glu-256 and Cys-290 contribute to the active site.

The protein belongs to the aldehyde dehydrogenase family.

The catalysed reaction is an aldehyde + NAD(+) + H2O = a carboxylate + NADH + 2 H(+). This chain is Putative aldehyde dehydrogenase AldA (aldA), found in Staphylococcus aureus (strain Mu50 / ATCC 700699).